A 417-amino-acid chain; its full sequence is Serine hydroxymethyltransferase (417 aa).

Residues L121 and 125 to 127 each bind (6S)-5,6,7,8-tetrahydrofolate; that span reads GHL. K229 is modified (N6-(pyridoxal phosphate)lysine). 355-357 serves as a coordination point for (6S)-5,6,7,8-tetrahydrofolate; that stretch reads SPF.

It belongs to the SHMT family. As to quaternary structure, homodimer. Requires pyridoxal 5'-phosphate as cofactor.

The protein localises to the cytoplasm. It catalyses the reaction (6R)-5,10-methylene-5,6,7,8-tetrahydrofolate + glycine + H2O = (6S)-5,6,7,8-tetrahydrofolate + L-serine. The protein operates within one-carbon metabolism; tetrahydrofolate interconversion. It functions in the pathway amino-acid biosynthesis; glycine biosynthesis; glycine from L-serine: step 1/1. In terms of biological role, catalyzes the reversible interconversion of serine and glycine with tetrahydrofolate (THF) serving as the one-carbon carrier. This reaction serves as the major source of one-carbon groups required for the biosynthesis of purines, thymidylate, methionine, and other important biomolecules. Also exhibits THF-independent aldolase activity toward beta-hydroxyamino acids, producing glycine and aldehydes, via a retro-aldol mechanism. This is Serine hydroxymethyltransferase from Xylella fastidiosa (strain M12).